Reading from the N-terminus, the 521-residue chain is BAR/IMD domain-containing adapter protein 2 (521 aa).

In terms of domain architecture, IMD spans 1-250 (MSLSRSEEMH…VQLMQQMGNS (250 aa)). The stretch at 132–153 (DALDKCQAELKKLRKKSQGSKN) forms a coiled coil. Residues Ser262, Ser324, Ser326, and Ser337 each carry the phosphoserine modification. The disordered stretch occupies residues 297–370 (APVMNGVSGP…TLPRSSSMAA (74 aa)). A compositionally biased stretch (low complexity) spans 321–333 (QPKSTSPPQSQSK). Thr341 bears the Phosphothreonine mark. Position 347 is a phosphoserine (Ser347). The span at 353–368 (SYATTENKTLPRSSSM) shows a compositional bias: polar residues. Position 361 is a phosphothreonine (Thr361). Residues Ser367, Ser385, Ser396, and Ser455 each carry the phosphoserine modification. The SH3 domain occupies 375–438 (NGRMRVKAIF…PFSYTRVLDN (64 aa)). The segment at 450-471 (QGKSSSTGNLLDKEDLALPPPD) is disordered.

In terms of assembly, homodimer. Interacts with CDC42 and RAC1 that have been activated by GTP binding. Interacts with ATN1, ADGRB1, DIAPH1, EPS8, SHANK1, SHANK2, SHANK3, TIAM1, WASF1 and WASF2. Interacts with ENAH after recruitment of CDC42. Post-translationally, phosphorylated on tyrosine residues by INSR in response to insulin treatment.

The protein localises to the cytoplasm. It is found in the membrane. Its subcellular location is the cell projection. It localises to the filopodium. The protein resides in the ruffle. The protein localises to the cytoskeleton. Its function is as follows. Adapter protein that links membrane-bound small G-proteins to cytoplasmic effector proteins. Necessary for CDC42-mediated reorganization of the actin cytoskeleton and for RAC1-mediated membrane ruffling. Involved in the regulation of the actin cytoskeleton by WASF family members and the Arp2/3 complex. Plays a role in neurite growth. Acts syngeristically with ENAH to promote filipodia formation. Plays a role in the reorganization of the actin cytoskeleton in response to bacterial infection. Participates in actin bundling when associated with EPS8, promoting filopodial protrusions. The sequence is that of BAR/IMD domain-containing adapter protein 2 (BAIAP2) from Bos taurus (Bovine).